The sequence spans 283 residues: Large ribosomal subunit protein uL4 (283 aa).

The protein belongs to the universal ribosomal protein uL4 family. Part of the 50S ribosomal subunit.

Functionally, one of the primary rRNA binding proteins, this protein initially binds near the 5'-end of the 23S rRNA. It is important during the early stages of 50S assembly. It makes multiple contacts with different domains of the 23S rRNA in the assembled 50S subunit and ribosome. Forms part of the polypeptide exit tunnel. The protein is Large ribosomal subunit protein uL4 of Pyrobaculum aerophilum (strain ATCC 51768 / DSM 7523 / JCM 9630 / CIP 104966 / NBRC 100827 / IM2).